Consider the following 311-residue polypeptide: Ribosomal RNA small subunit methyltransferase H (311 aa).

S-adenosyl-L-methionine contacts are provided by residues G34–H36, D54, F78, D100, and Q107.

The protein belongs to the methyltransferase superfamily. RsmH family.

Its subcellular location is the cytoplasm. It carries out the reaction cytidine(1402) in 16S rRNA + S-adenosyl-L-methionine = N(4)-methylcytidine(1402) in 16S rRNA + S-adenosyl-L-homocysteine + H(+). In terms of biological role, specifically methylates the N4 position of cytidine in position 1402 (C1402) of 16S rRNA. This Hamiltonella defensa subsp. Acyrthosiphon pisum (strain 5AT) protein is Ribosomal RNA small subunit methyltransferase H.